A 203-amino-acid polypeptide reads, in one-letter code: V-type ATP synthase subunit D (203 aa).

It belongs to the V-ATPase D subunit family.

Its function is as follows. Produces ATP from ADP in the presence of a proton gradient across the membrane. This is V-type ATP synthase subunit D from Streptococcus pneumoniae (strain Hungary19A-6).